Reading from the N-terminus, the 620-residue chain is MDSHTLIQALIYLGSAALIVPIAVRLGLGSVLGYLIAGCIIGPWGLRLVTDAESILHFAEIGVVLMLFIIGLELDPQRLWKLRAAVFGGGALQMVICGGLLGLFCMLLGLHWQVAELIGMTLALSSTAIAMQAMNERNLMVTQMGRSAFAVLLFQDIAAIPLVAMIPLLATSSASTTMGAFALSALKVAGALVLVVLLGRYVTRPALRFVARSGLREVFSAVALFLVFGFGLLLEEVGLSMAMGAFLAGVLLASSEYRHALESDIEPFKGLLLGLFFIGVGMSIDFGTLLENPLRIVILLLGFLIIKIAMLWLIARPLQVPNKQRRWFAVLLGQGSEFAFVVFGTAQMANVLEPEWAKSLTLAVALSMAATPILLVILNRLEQSSTEEAREADEIDEEQPRVIIAGFGRFGQITGRLLLSSGVKMVVLDHDPDHIETLRKFGMKVFYGDATRMDLLESAGAAKAEVLINAIDDPQTNLQLTEMVKEHFPHLQIIARARDVDHYIRLRQAGVEKPERETFEGALKTGRLALESLGLGPYEARERADVFRRFNIQMVEEMAMVENDTKARAAVYKRTSAMLSEIITEDREHLSLIQRHGWQGTEEGKHTGNMADEPETKPSS.

The next 12 helical transmembrane spans lie at His-4–Val-24, Leu-26–Leu-46, Ser-54–Leu-74, Gly-90–Leu-110, Val-114–Met-134, Phe-149–Leu-169, Met-178–Leu-198, Val-218–Gly-238, Gly-270–Leu-290, Leu-294–Ile-314, Trp-327–Gln-347, and Ser-359–Asn-379. In terms of domain architecture, RCK N-terminal spans Gln-399 to Thr-518. Residues Gly-597 to Ser-620 form a disordered region.

Belongs to the monovalent cation:proton antiporter 2 (CPA2) transporter (TC 2.A.37) family. KefC subfamily. As to quaternary structure, homodimer. Interacts with the regulatory subunit KefF.

The protein resides in the cell inner membrane. In terms of biological role, pore-forming subunit of a potassium efflux system that confers protection against electrophiles. Catalyzes K(+)/H(+) antiport. This Shigella sonnei (strain Ss046) protein is Glutathione-regulated potassium-efflux system protein KefC.